The sequence spans 292 residues: Homeobox-leucine zipper protein HOX19 (292 aa).

Disordered regions lie at residues 14–85, 99–133, and 217–236; these read LALG…HSVS, RERA…RLTK, and FAPP…PPAP. Residues 28-74 show a composition bias toward low complexity; sequence TDAAAAHRGGCRRPSPSSQCPPLEPSLTLSLPDDAAAGAAATATATA. Over residues 99-109 the composition is skewed to basic and acidic residues; it reads RERAEEADGER. A DNA-binding region (homeobox) is located at residues 124-183; that stretch reads STRKKLRLTKEQSALLEDRFREHSTLNPKQKVALAKQLNLRPRQVEVWFQNRRARTKLKQ. Residues 182–226 form a leucine-zipper region; sequence KQTEVDCEFLKRCCETLTEENRRLQRELQELRALKFAPPPPSSAA.

The protein belongs to the HD-ZIP homeobox family. Class II subfamily. In terms of tissue distribution, expressed in seedlings, roots, stems, leaf sheaths and blades and panicles.

The protein localises to the nucleus. In terms of biological role, probable transcription factor. The chain is Homeobox-leucine zipper protein HOX19 (HOX19) from Oryza sativa subsp. japonica (Rice).